The sequence spans 247 residues: uncharacterized protein (247 aa).

The HTH merR-type domain maps to 11-85 (GMSIGAVLDL…LKVIRAQLDA (75 aa)). A DNA-binding region (H-T-H motif) is located at residues 14 to 38 (IGAVLDLLRPDFPDVTISKIRFLEA).

In terms of assembly, homodimer.

Its function is as follows. Transcriptional regulator that binds to its own promoter and thus may play a role in the regulation of the cotranscribed genes Rv1827 and Rv1828. Can also bind several promoter regions of genes that are essential, including ftsZ. Binds to the imperfect everted repeat sequence CTCAA through its winged-HTH motif. This is an uncharacterized protein from Mycobacterium tuberculosis (strain ATCC 25618 / H37Rv).